Reading from the N-terminus, the 170-residue chain is Phosphopantetheine adenylyltransferase (170 aa).

A substrate-binding site is contributed by T14. ATP contacts are provided by residues 14–15 (TF) and H22. K46, L78, and R92 together coordinate substrate. ATP contacts are provided by residues 93–95 (GLR), E103, and 128–134 (WLYISST).

It belongs to the bacterial CoaD family. Homohexamer. Mg(2+) serves as cofactor.

It localises to the cytoplasm. It carries out the reaction (R)-4'-phosphopantetheine + ATP + H(+) = 3'-dephospho-CoA + diphosphate. It participates in cofactor biosynthesis; coenzyme A biosynthesis; CoA from (R)-pantothenate: step 4/5. In terms of biological role, reversibly transfers an adenylyl group from ATP to 4'-phosphopantetheine, yielding dephospho-CoA (dPCoA) and pyrophosphate. The polypeptide is Phosphopantetheine adenylyltransferase (Oleidesulfovibrio alaskensis (strain ATCC BAA-1058 / DSM 17464 / G20) (Desulfovibrio alaskensis)).